Consider the following 283-residue polypeptide: Elongation factor Ts (283 aa).

An involved in Mg(2+) ion dislocation from EF-Tu region spans residues 84 to 87; the sequence is TDFV.

Belongs to the EF-Ts family.

It localises to the cytoplasm. Functionally, associates with the EF-Tu.GDP complex and induces the exchange of GDP to GTP. It remains bound to the aminoacyl-tRNA.EF-Tu.GTP complex up to the GTP hydrolysis stage on the ribosome. The polypeptide is Elongation factor Ts (Bifidobacterium longum (strain DJO10A)).